Consider the following 470-residue polypeptide: UDP-N-acetylmuramate--L-alanine ligase (470 aa).

Residue 118 to 124 (GTHGKTT) coordinates ATP.

The protein belongs to the MurCDEF family.

Its subcellular location is the cytoplasm. The catalysed reaction is UDP-N-acetyl-alpha-D-muramate + L-alanine + ATP = UDP-N-acetyl-alpha-D-muramoyl-L-alanine + ADP + phosphate + H(+). It functions in the pathway cell wall biogenesis; peptidoglycan biosynthesis. In terms of biological role, cell wall formation. The polypeptide is UDP-N-acetylmuramate--L-alanine ligase (Cereibacter sphaeroides (strain ATCC 17029 / ATH 2.4.9) (Rhodobacter sphaeroides)).